A 259-amino-acid polypeptide reads, in one-letter code: Global transcriptional regulator CodY (259 aa).

Residues 1–155 are GAF domain; sequence MTLLEKTRKI…GGTVVGMEIL (155 aa). The segment at residues 203–222 is a DNA-binding region (H-T-H motif); that stretch reads ASKIADRVGITRSVIVNALR.

It belongs to the CodY family.

Its subcellular location is the cytoplasm. Its function is as follows. DNA-binding global transcriptional regulator which is involved in the adaptive response to starvation and acts by directly or indirectly controlling the expression of numerous genes in response to nutrient availability. During rapid exponential growth, CodY is highly active and represses genes whose products allow adaptation to nutrient depletion. The chain is Global transcriptional regulator CodY from Listeria welshimeri serovar 6b (strain ATCC 35897 / DSM 20650 / CCUG 15529 / CIP 8149 / NCTC 11857 / SLCC 5334 / V8).